We begin with the raw amino-acid sequence, 366 residues long: Chorismate synthase (366 aa).

NADP(+) contacts are provided by Arg-48 and Arg-54. Residues 125–127 (RSS), 238–239 (NA), Gly-278, 293–297 (KPTSS), and Arg-319 each bind FMN.

This sequence belongs to the chorismate synthase family. In terms of assembly, homotetramer. The cofactor is FMNH2.

It carries out the reaction 5-O-(1-carboxyvinyl)-3-phosphoshikimate = chorismate + phosphate. The protein operates within metabolic intermediate biosynthesis; chorismate biosynthesis; chorismate from D-erythrose 4-phosphate and phosphoenolpyruvate: step 7/7. Its function is as follows. Catalyzes the anti-1,4-elimination of the C-3 phosphate and the C-6 proR hydrogen from 5-enolpyruvylshikimate-3-phosphate (EPSP) to yield chorismate, which is the branch point compound that serves as the starting substrate for the three terminal pathways of aromatic amino acid biosynthesis. This reaction introduces a second double bond into the aromatic ring system. This is Chorismate synthase from Laribacter hongkongensis (strain HLHK9).